The sequence spans 87 residues: Small ribosomal subunit protein bS20 (87 aa).

The tract at residues 1–22 (MANIKSQIKRIGTNKKAQERNK) is disordered.

The protein belongs to the bacterial ribosomal protein bS20 family.

Its function is as follows. Binds directly to 16S ribosomal RNA. The polypeptide is Small ribosomal subunit protein bS20 (Clavibacter sepedonicus (Clavibacter michiganensis subsp. sepedonicus)).